The following is a 203-amino-acid chain: Pyrrolidone-carboxylate peptidase 1 (203 aa).

Active-site residues include glutamate 78, cysteine 141, and histidine 165.

Belongs to the peptidase C15 family. In terms of assembly, homotetramer.

The protein localises to the cytoplasm. It carries out the reaction Release of an N-terminal pyroglutamyl group from a polypeptide, the second amino acid generally not being Pro.. Its function is as follows. Removes 5-oxoproline from various penultimate amino acid residues except L-proline. The polypeptide is Pyrrolidone-carboxylate peptidase 1 (Caldanaerobacter subterraneus subsp. tengcongensis (strain DSM 15242 / JCM 11007 / NBRC 100824 / MB4) (Thermoanaerobacter tengcongensis)).